The sequence spans 159 residues: MNISIISVGKIKEKFLKAAIDEYSKRLSKYCKLNIIEVADEKTPDNASLKEENIIKEKEGNLILKHIKDNSFVIALDLKGKSITSEEFSDLIENCRLTGNSTIAFVIGGSLGLSEQVLSRANYKLSFSKMTFPHQLFRVMLLEQVYRAFRILCGEPYHK.

S-adenosyl-L-methionine contacts are provided by residues leucine 76, glycine 108, and 127-132; that span reads FSKMTF.

It belongs to the RNA methyltransferase RlmH family. In terms of assembly, homodimer.

Its subcellular location is the cytoplasm. It catalyses the reaction pseudouridine(1915) in 23S rRNA + S-adenosyl-L-methionine = N(3)-methylpseudouridine(1915) in 23S rRNA + S-adenosyl-L-homocysteine + H(+). Its function is as follows. Specifically methylates the pseudouridine at position 1915 (m3Psi1915) in 23S rRNA. This is Ribosomal RNA large subunit methyltransferase H from Clostridium botulinum (strain Kyoto / Type A2).